The primary structure comprises 517 residues: Dopamine receptor 4 (517 aa).

Residues 1-46 are Extracellular-facing; sequence MLAYGSDPNAEDLYITMTPSVSTENDTTVWATEEPAAIVWRHPLLA. Residue asparagine 25 is glycosylated (N-linked (GlcNAc...) asparagine). Residues 47–67 traverse the membrane as a helical segment; sequence IALFSICLLTVAGNCLVVIAV. At 68–77 the chain is on the cytoplasmic side; it reads CTKKYLRNPT. The helical transmembrane segment at 78–98 threads the bilayer; that stretch reads GYLIISLAIADLIVGVIVMPM. Topologically, residues 99–108 are extracellular; it reads NSLFEIANHT. Asparagine 106 carries an N-linked (GlcNAc...) asparagine glycan. A helical transmembrane segment spans residues 109 to 129; that stretch reads WLFGLMMCDVFHAMDILASTA. At 130 to 159 the chain is on the cytoplasmic side; sequence SIWNLCVISLDRYMAGQDPIGYRDKVSKRR. A helical membrane pass occupies residues 160–180; that stretch reads ILMAILSVWVLSAILSFPGII. Residues 181-209 are Extracellular-facing; sequence WWRTSSPHLYEDQSQCLFTDSKMYVSFSS. The helical transmembrane segment at 210-230 threads the bilayer; the sequence is LVSFYIPLFLILFAYGKVYII. The Cytoplasmic portion of the chain corresponds to 231–409; sequence ATRHSKGMRM…YVHEQRAART (179 aa). Residues 309–339 form a disordered region; the sequence is NDRGEHNNNNTVRQPLLRGTEGCHSDSISRS. The helical transmembrane segment at 410 to 430 threads the bilayer; it reads LSIVVGAFILCWTPFFVFTPL. Topologically, residues 431–442 are extracellular; the sequence is TAFCESCFSNKE. A helical transmembrane segment spans residues 443–463; the sequence is TIFTFVTWAGHLNSMLNPLIY. Residues 464–517 lie on the Cytoplasmic side of the membrane; the sequence is SRFSRDFRRAFKQILTCQRQQKVKTAFKTPLSLVFTQLISVTQMWEQPPNTSIE.

This sequence belongs to the G-protein coupled receptor 1 family. In terms of tissue distribution, expressed in pharyngeal neurons I1 and I2, neurons ASG, AVL, CAN, PQR, vulva, intestine, rectal glands and rectal epithelial glands. Also expressed in neurons in ray 8 in males.

It is found in the cell membrane. In terms of biological role, receptor for dopamine. The activity of this receptor is mediated by G proteins which activate adenylyl cyclase. In terms of antagonist responses, would be classed with the D1-like dopamine receptor group. The sequence is that of Dopamine receptor 4 (dop-4) from Caenorhabditis elegans.